Here is a 261-residue protein sequence, read N- to C-terminus: Matrix metalloproteinase-26 (261 aa).

A signal peptide spans 1–17 (MQLVILRVTIFLPWCFA). A propeptide spanning residues 18 to 89 (VPVPPAADHK…PHCGVPDGSD (72 aa)) is cleaved from the precursor. N-linked (GlcNAc...) asparagine glycosylation occurs at Asn-64. The Cysteine switch signature appears at 80–87 (PHCGVPDG). The Zn(2+) site is built by Cys-82 and His-208. Glu-209 is a catalytic residue. Zn(2+) is bound by residues His-212 and His-218. The N-linked (GlcNAc...) asparagine glycan is linked to Asn-221.

It belongs to the peptidase M10A family. Zn(2+) serves as cofactor. The cofactor is Ca(2+). In terms of tissue distribution, expressed specifically in uterus and placenta. Is also widely expressed in malignant tumors from different sources as well as in diverse tumor cell lines.

It localises to the secreted. The protein localises to the extracellular space. It is found in the extracellular matrix. Its function is as follows. May hydrolyze collagen type IV, fibronectin, fibrinogen, beta-casein, type I gelatin and alpha-1 proteinase inhibitor. Is also able to activate progelatinase B. This is Matrix metalloproteinase-26 (MMP26) from Homo sapiens (Human).